Reading from the N-terminus, the 184-residue chain is NADH-quinone oxidoreductase subunit B (184 aa).

4 residues coordinate [4Fe-4S] cluster: C37, C38, C103, and C132.

Belongs to the complex I 20 kDa subunit family. As to quaternary structure, NDH-1 is composed of 14 different subunits. Subunits NuoB, C, D, E, F, and G constitute the peripheral sector of the complex. Requires [4Fe-4S] cluster as cofactor.

Its subcellular location is the cell membrane. It carries out the reaction a quinone + NADH + 5 H(+)(in) = a quinol + NAD(+) + 4 H(+)(out). Functionally, NDH-1 shuttles electrons from NADH, via FMN and iron-sulfur (Fe-S) centers, to quinones in the respiratory chain. The immediate electron acceptor for the enzyme in this species is believed to be a menaquinone. Couples the redox reaction to proton translocation (for every two electrons transferred, four hydrogen ions are translocated across the cytoplasmic membrane), and thus conserves the redox energy in a proton gradient. The polypeptide is NADH-quinone oxidoreductase subunit B (Mycolicibacterium gilvum (strain PYR-GCK) (Mycobacterium gilvum (strain PYR-GCK))).